A 135-amino-acid chain; its full sequence is Interleukin-4 (135 aa).

The signal sequence occupies residues 1–24 (MGLTSQLIPALVCLLVCTSHFVHG). 2 disulfides stabilise this stretch: Cys-48–Cys-85 and Cys-70–Cys-105. Asn-62 and Asn-96 each carry an N-linked (GlcNAc...) asparagine glycan.

The protein belongs to the IL-4/IL-13 family.

It is found in the secreted. Participates in at least several B-cell activation processes as well as of other cell types. It is a costimulator of DNA-synthesis. It induces the expression of class II MHC molecules on resting B-cells. It enhances both secretion and cell surface expression of IgE and IgG1. It also regulates the expression of the low affinity Fc receptor for IgE (CD23) on both lymphocytes and monocytes. Positively regulates IL31RA expression in macrophages. Stimulates autophagy in dendritic cells by interfering with mTORC1 signaling and through the induction of RUFY4. The chain is Interleukin-4 (IL4) from Ovis aries (Sheep).